A 396-amino-acid polypeptide reads, in one-letter code: Elongation factor Tu (396 aa).

One can recognise a tr-type G domain in the interval 10–206 (KPHINVGTIG…ALDSYIPEPQ (197 aa)). The G1 stretch occupies residues 19–26 (GHVDHGKT). 19–26 (GHVDHGKT) is a GTP binding site. Thr26 lines the Mg(2+) pocket. A G2 region spans residues 60–64 (GITIN). Residues 81-84 (DCPG) are G3. GTP is bound by residues 81 to 85 (DCPGH) and 136 to 139 (NKAD). Residues 136-139 (NKAD) are G4. The G5 stretch occupies residues 174-176 (SAL).

Belongs to the TRAFAC class translation factor GTPase superfamily. Classic translation factor GTPase family. EF-Tu/EF-1A subfamily. As to quaternary structure, monomer.

It localises to the cytoplasm. The catalysed reaction is GTP + H2O = GDP + phosphate + H(+). GTP hydrolase that promotes the GTP-dependent binding of aminoacyl-tRNA to the A-site of ribosomes during protein biosynthesis. This Nitrosospira multiformis (strain ATCC 25196 / NCIMB 11849 / C 71) protein is Elongation factor Tu.